Consider the following 154-residue polypeptide: Ribosome maturation factor RimP (154 aa).

This sequence belongs to the RimP family.

The protein resides in the cytoplasm. In terms of biological role, required for maturation of 30S ribosomal subunits. This Cyanothece sp. (strain PCC 7425 / ATCC 29141) protein is Ribosome maturation factor RimP.